Consider the following 74-residue polypeptide: Anionic peptide clone 9 (74 aa).

Residues 1–24 form the signal peptide; that stretch reads MVSKSLIVLLLVSVLVSTFFTTEA.

The protein belongs to the non-disulfide-bridged peptide (NDBP) superfamily. Long chain multifunctional peptide (group 2) family. As to expression, expressed by the venom gland.

It is found in the secreted. In terms of biological role, may be an antimicrobial peptide. The protein is Anionic peptide clone 9 of Tityus costatus (Brazilian scorpion).